The primary structure comprises 171 residues: 3-hydroxydecanoyl-[acyl-carrier-protein] dehydratase (171 aa).

His-71 is a catalytic residue.

Belongs to the thioester dehydratase family. FabA subfamily. As to quaternary structure, homodimer.

The protein localises to the cytoplasm. The enzyme catalyses a (3R)-hydroxyacyl-[ACP] = a (2E)-enoyl-[ACP] + H2O. The catalysed reaction is (3R)-hydroxydecanoyl-[ACP] = (2E)-decenoyl-[ACP] + H2O. It carries out the reaction (2E)-decenoyl-[ACP] = (3Z)-decenoyl-[ACP]. Its pathway is lipid metabolism; fatty acid biosynthesis. Functionally, necessary for the introduction of cis unsaturation into fatty acids. Catalyzes the dehydration of (3R)-3-hydroxydecanoyl-ACP to E-(2)-decenoyl-ACP and then its isomerization to Z-(3)-decenoyl-ACP. Can catalyze the dehydratase reaction for beta-hydroxyacyl-ACPs with saturated chain lengths up to 16:0, being most active on intermediate chain length. This chain is 3-hydroxydecanoyl-[acyl-carrier-protein] dehydratase, found in Rhizobium rhizogenes (strain K84 / ATCC BAA-868) (Agrobacterium radiobacter).